The chain runs to 344 residues: Cycloartenol-C-24-methyltransferase 1 (344 aa).

This sequence belongs to the class I-like SAM-binding methyltransferase superfamily. Erg6/SMT family.

The enzyme catalyses zymosterol + S-adenosyl-L-methionine = fecosterol + S-adenosyl-L-homocysteine + H(+). Its pathway is steroid biosynthesis; sterol biosynthesis. In terms of biological role, catalyzes the methyl transfer from S-adenosyl-methionine to the C-24 of cycloartenol to form 24-methylene cycloartenol. The polypeptide is Cycloartenol-C-24-methyltransferase 1 (Smt1-1) (Oryza sativa subsp. japonica (Rice)).